The sequence spans 48 residues: MVKKTIAAIFSVLVLSTVLTACNTTRGVGEDISDGGNAISGAATKAQQ.

The N-terminal stretch at 1–21 (MVKKTIAAIFSVLVLSTVLTA) is a signal peptide. The N-palmitoyl cysteine moiety is linked to residue cysteine 22. Cysteine 22 carries S-diacylglycerol cysteine lipidation.

Belongs to the EcnA/EcnB lipoprotein family.

It is found in the cell membrane. In terms of biological role, plays a role in the bacteriolysis. Is activated under conditions of high osmolarity by the factor sigma S. Entericidin A functions as an antidote. This Escherichia coli O157:H7 protein is Entericidin B (ecnB).